A 262-amino-acid polypeptide reads, in one-letter code: Linker for activation of T-cells family member 1 (262 aa).

The Extracellular segment spans residues 1 to 4 (MEEA). Residues 5–27 (ILVPCVLGLLLLPILAMLMALCV) traverse the membrane as a helical; Signal-anchor for type III membrane protein segment. S-palmitoyl cysteine attachment occurs at residues Cys26 and Cys29. At 28–262 (HCHRLPGSYD…PDYENLQELN (235 aa)) the chain is on the cytoplasmic side. Residue Thr39 is modified to Phosphothreonine. Ser40, Ser41, Ser43, Ser84, Ser101, Ser106, and Ser109 each carry phosphoserine. The disordered stretch occupies residues 69 to 115 (SYPPLSQPDLLPIPRSPQPLGGSHRTPSSRRDSDGANSVASYENEGA). A phosphotyrosine mark is found at Tyr110, Tyr156, Tyr161, Tyr200, and Tyr220. The interaction with PLCG1 stretch occupies residues 161 to 164 (YLVV). Interaction with GRB2, GRAP2 and PIK3R1 regions lie at residues 200–203 (YVNV) and 220–223 (YVNV). Residues 206–262 (SGESAEASLDGSREYVNVSQELHPGAAKTEPAALSSQEAEEVEEEGAPDYENLQELN) form a disordered region. Phosphoserine is present on residues Ser224, Ser240, and Ser241. A compositionally biased stretch (acidic residues) spans 243–253 (EAEEVEEEGAP). Tyr255 is modified (phosphotyrosine).

In terms of assembly, when phosphorylated, interacts directly with the PIK3R1 subunit of phosphoinositide 3-kinase and the SH2 domains of GRB2, GRAP, GRAP2, PLCG1 and PLCG2. Interacts indirectly with CBL, SOS, VAV, and LCP2. Interacts with SHB, SKAP2 and CLNK. Interacts with FCGR1A. Interacts with GRB2, PLCG1 and THEMIS upon TCR activation in thymocytes. Interacts with THEMIS2. (Microbial infection) Interacts with herpes virus 1/HHV-1 protein US3; this interaction prevents the interaction between LAT and TRAF6. Phosphorylated on tyrosines by ZAP70 upon TCR activation, or by SYK upon other immunoreceptor activation; which leads to the recruitment of multiple signaling molecules. Is one of the most prominently tyrosine-phosphorylated proteins detected following TCR engagement. May be dephosphorylated by PTPRJ. Phosphorylated by ITK leading to the recruitment of VAV1 to LAT-containing complexes. In terms of processing, palmitoylation of Cys-26 and Cys-29 is required for raft targeting and efficient phosphorylation. Post-translationally, 'Lys-63'-linked ubiquitinated by TRAF6. In terms of tissue distribution, expressed in thymus, T-cells, NK cells, mast cells and, at lower levels, in spleen. Present in T-cells but not B-cells (at protein level).

Its subcellular location is the cell membrane. Required for TCR (T-cell antigen receptor)- and pre-TCR-mediated signaling, both in mature T-cells and during their development. Involved in FCGR3 (low affinity immunoglobulin gamma Fc region receptor III)-mediated signaling in natural killer cells and FCER1 (high affinity immunoglobulin epsilon receptor)-mediated signaling in mast cells. Couples activation of these receptors and their associated kinases with distal intracellular events such as mobilization of intracellular calcium stores, PKC activation, MAPK activation or cytoskeletal reorganization through the recruitment of PLCG1, GRB2, GRAP2, and other signaling molecules. The chain is Linker for activation of T-cells family member 1 (LAT) from Homo sapiens (Human).